Here is a 73-residue protein sequence, read N- to C-terminus: Conotoxin Lt9a (73 aa).

The signal sequence occupies residues 1–23; sequence MTLTKSAVLILVLLLAFDNFADV. Residues 24–40 constitute a propeptide that is removed on maturation; sequence QPGLITMGGGRLSNLLS. Disulfide bonds link C48-C62, C53-C64, and C59-C69.

The protein belongs to the conotoxin P superfamily. Expressed by the venom duct.

It localises to the secreted. Its function is as follows. Probable neurotoxin that inhibits ion channels. The chain is Conotoxin Lt9a from Conus litteratus (Lettered cone).